A 287-amino-acid chain; its full sequence is Nucleotide-binding protein Ppro_0977 (287 aa).

Glycine 8–serine 15 contacts ATP. Residue aspartate 59–glycine 62 participates in GTP binding.

Belongs to the RapZ-like family.

Its function is as follows. Displays ATPase and GTPase activities. In Pelobacter propionicus (strain DSM 2379 / NBRC 103807 / OttBd1), this protein is Nucleotide-binding protein Ppro_0977.